The primary structure comprises 389 residues: Flavin-dependent monooxygenase (389 aa).

FAD-binding positions include 12–15 (AGVA), 34–35 (EK), glutamine 44, arginine 105, tyrosine 267, and aspartate 289.

It belongs to the aromatic-ring hydroxylase family. The cofactor is FAD.

The catalysed reaction is a tetracycline + NADPH + O2 + H(+) = a (1S,10aS)-3-(CONH2)-1-(Me2N)-3,3a,4,6-(HO)4-2,5-dioxo-1H,10aH,11H,11aH-cyclopenta[b]anthracene + CO + NADP(+) + H2O. It catalyses the reaction 7-chlorotetracycline + NADPH + O2 + H(+) = (1S,10S,10aS)-3-(CONH2)-9-Cl-1-(Me2N)-3,3a,4,10-(HO)4-10-Me-2,5-dioxo-1H,10aH,11H,11aH-cyclopenta[b]anthracen-6-olate + CO + NADP(+) + H2O. With respect to regulation, inhibited by anhydrotetracycline. Its function is as follows. An FAD-requiring monooxygenase active on tetracycline antibiotic and some of its derivatives, which leads to their inactivation. Expression in E.coli confers high resistance to tetracycline and oxytetracycline, does not confer resistance to minocycline or tigecycline. The reaction requires NADPH. Expression in L.pneumophila confers resistance to tetracycline. Degrades and confers resistance to tetracycline and chlortetracycline. The protein is Flavin-dependent monooxygenase (tet(56)) of Legionella longbeachae serogroup 1 (strain NSW150).